The following is a 248-amino-acid chain: ATP synthase subunit a (248 aa).

7 helical membrane-spanning segments follow: residues 29-49 (AMLTTCVSLSFFLFLFYCLFS), 85-105 (VFPFLFVIFSFILISNVQGLV), 115-135 (LIQTMVLALTVFIGVIIIVLA), 143-163 (LFLPGGTSIVLAFLLVPIEIV), 176-196 (LFANMMAGHTLLKVIAAVAWA), 201-221 (GGLLLIAHIVPLGVLVILFGL), and 227-247 (LIQAYVFTILSCIYINDAIVL).

It belongs to the ATPase A chain family. F-type ATPases have 2 components, CF(1) - the catalytic core - and CF(0) - the membrane proton channel. CF(1) has five subunits: alpha(3), beta(3), gamma(1), delta(1), epsilon(1). CF(0) has three main subunits: a, b and c.

The protein localises to the mitochondrion inner membrane. In terms of biological role, mitochondrial membrane ATP synthase (F(1)F(0) ATP synthase or Complex V) produces ATP from ADP in the presence of a proton gradient across the membrane which is generated by electron transport complexes of the respiratory chain. F-type ATPases consist of two structural domains, F(1) - containing the extramembraneous catalytic core and F(0) - containing the membrane proton channel, linked together by a central stalk and a peripheral stalk. During catalysis, ATP synthesis in the catalytic domain of F(1) is coupled via a rotary mechanism of the central stalk subunits to proton translocation. Key component of the proton channel; it may play a direct role in the translocation of protons across the membrane. The polypeptide is ATP synthase subunit a (ATP6) (Pylaiella littoralis (Seaweed)).